The sequence spans 298 residues: HTH-type transcriptional regulator CzcR (298 aa).

In terms of domain architecture, HTH lysR-type spans 11–68; that stretch reads MELRDLQIFQSVADQGSVSSAAKELNYVQSNVTARIKQLENELKTPLFYRHKRGMTLT. Positions 28–47 form a DNA-binding region, H-T-H motif; the sequence is VSSAAKELNYVQSNVTARIK.

It belongs to the LysR transcriptional regulatory family.

In Bacillus thuringiensis (strain Al Hakam), this protein is HTH-type transcriptional regulator CzcR (czcR).